Here is a 202-residue protein sequence, read N- to C-terminus: Snake venom metalloproteinase fibrolase (202 aa).

Residues 6 to 202 (RYIELVIVAD…HNPQCILNQP (197 aa)) form the Peptidase M12B domain. Glu-9 provides a ligand contact to Ca(2+). An N-linked (GlcNAc...) asparagine glycan is attached at Asn-25. Asp-93 contacts Ca(2+). 3 disulfide bridges follow: Cys-117–Cys-197, Cys-157–Cys-181, and Cys-159–Cys-164. His-142 contacts Zn(2+). Residue Glu-143 is part of the active site. Positions 146 and 152 each coordinate Zn(2+). Cys-197 and Asn-200 together coordinate Ca(2+).

It belongs to the venom metalloproteinase (M12B) family. P-I subfamily. Monomer. Zn(2+) is required as a cofactor. Post-translationally, glycosylated. Expressed by the venom gland.

The protein localises to the secreted. The catalysed reaction is Hydrolysis of 14-Ala-|-Leu-15 in insulin B chain and 413-Lys-|-Leu-414 in alpha-chain of fibrinogen.. Activated by calcium and magnesium ions. Inhibited by EDTA, DTT and L-cysteine. Activity is not affected by PMSF or heparin. In terms of biological role, has fibrino(geno)lytic activity on the alpha and beta chains of fibrinogen (FGA and FGB). Inhibits human ADP- and collagen-induced platelet aggregation on platelet-rich plasma but does not affect the thrombin-induced aggregation of rabbit washed platelets. Slightly degrades plasminogen. The sequence is that of Snake venom metalloproteinase fibrolase from Macrovipera lebetinus (Levantine viper).